Here is a 318-residue protein sequence, read N- to C-terminus: Putative 2-hydroxyacid dehydrogenase SSP0606 (318 aa).

NAD(+) contacts are provided by residues 156–157 (EI), 235–237 (ASR), and aspartate 261. Arginine 237 is a catalytic residue. The active site involves glutamate 266. The active-site Proton donor is histidine 284. 284–287 (HIGN) contributes to the NAD(+) binding site.

This sequence belongs to the D-isomer specific 2-hydroxyacid dehydrogenase family.

This chain is Putative 2-hydroxyacid dehydrogenase SSP0606, found in Staphylococcus saprophyticus subsp. saprophyticus (strain ATCC 15305 / DSM 20229 / NCIMB 8711 / NCTC 7292 / S-41).